Reading from the N-terminus, the 314-residue chain is Formimidoylglutamase (314 aa).

His-127, Asp-153, His-155, Asp-157, Asp-245, and Asp-247 together coordinate Mn(2+).

Belongs to the arginase family. The cofactor is Mn(2+).

The catalysed reaction is N-formimidoyl-L-glutamate + H2O = formamide + L-glutamate. The protein operates within amino-acid degradation; L-histidine degradation into L-glutamate; L-glutamate from N-formimidoyl-L-glutamate (hydrolase route): step 1/1. Functionally, catalyzes the conversion of N-formimidoyl-L-glutamate to L-glutamate and formamide. The protein is Formimidoylglutamase of Aeromonas hydrophila subsp. hydrophila (strain ATCC 7966 / DSM 30187 / BCRC 13018 / CCUG 14551 / JCM 1027 / KCTC 2358 / NCIMB 9240 / NCTC 8049).